The sequence spans 432 residues: Glutamyl-tRNA reductase (432 aa).

Residues 49 to 52, S101, 106 to 108, and Q112 contribute to the substrate site; these read TCNR and EPQ. The active-site Nucleophile is the C50. 181–186 serves as a coordination point for NADP(+); it reads GAGETI. The segment at 408 to 432 is disordered; it reads PEKPGYRHPPVATPIVRTDDANPAP.

This sequence belongs to the glutamyl-tRNA reductase family. Homodimer.

The catalysed reaction is (S)-4-amino-5-oxopentanoate + tRNA(Glu) + NADP(+) = L-glutamyl-tRNA(Glu) + NADPH + H(+). Its pathway is porphyrin-containing compound metabolism; protoporphyrin-IX biosynthesis; 5-aminolevulinate from L-glutamyl-tRNA(Glu): step 1/2. Catalyzes the NADPH-dependent reduction of glutamyl-tRNA(Glu) to glutamate 1-semialdehyde (GSA). The chain is Glutamyl-tRNA reductase from Xanthomonas campestris pv. campestris (strain 8004).